A 209-amino-acid polypeptide reads, in one-letter code: MTKKPIVVGVTGGSGSGKTSVTKAICDHFSGHSILMIAQDVYYHDQADISFEERLKVNYDHPLAFDTDLLISHIAALRRYETIEKPIYDYEKYTRKQEVEIQEPREVIILEGILILEDKRLRDLMDIKVYVDTDDDIRFIRRLLRDMKERGRTMDSVIDQYLSVVKPMHNEFIEPTKKFADIIIPEGGENHVAIDLMTTKIESILQKHV.

12–19 (GGSGSGKT) provides a ligand contact to ATP.

This sequence belongs to the uridine kinase family.

It localises to the cytoplasm. The enzyme catalyses uridine + ATP = UMP + ADP + H(+). It catalyses the reaction cytidine + ATP = CMP + ADP + H(+). Its pathway is pyrimidine metabolism; CTP biosynthesis via salvage pathway; CTP from cytidine: step 1/3. It functions in the pathway pyrimidine metabolism; UMP biosynthesis via salvage pathway; UMP from uridine: step 1/1. The sequence is that of Uridine kinase from Listeria innocua serovar 6a (strain ATCC BAA-680 / CLIP 11262).